A 609-amino-acid chain; its full sequence is Phosphoenolpyruvate carboxykinase [GTP] (609 aa).

Substrate is bound by residues arginine 81 and 220–222 (YGG). Positions 229 and 249 each coordinate Mn(2+). Serine 271 serves as a coordination point for substrate. 272–277 (ACGKTN) lines the GTP pocket. Cysteine 273 is a catalytic residue. Aspartate 296 lines the Mn(2+) pocket. 387–389 (NSR) provides a ligand contact to substrate. Residues arginine 389, arginine 420, and 515-518 (FGEN) each bind GTP.

This sequence belongs to the phosphoenolpyruvate carboxykinase [GTP] family. In terms of assembly, monomer. It depends on Mn(2+) as a cofactor.

The protein resides in the cytoplasm. It carries out the reaction oxaloacetate + GTP = phosphoenolpyruvate + GDP + CO2. It functions in the pathway carbohydrate biosynthesis; gluconeogenesis. Functionally, catalyzes the conversion of oxaloacetate (OAA) to phosphoenolpyruvate (PEP), the rate-limiting step in the metabolic pathway that produces glucose from lactate and other precursors derived from the citric acid cycle. In Mycobacterium marinum (strain ATCC BAA-535 / M), this protein is Phosphoenolpyruvate carboxykinase [GTP].